A 192-amino-acid chain; its full sequence is Ras-like protein 2 (192 aa).

GTP is bound at residue 12–19; it reads GGGGVGKS. The Effector region motif lies at 34–42; the sequence is YDPTIEDSY. C46 is lipidated: S-palmitoyl cysteine. GTP contacts are provided by residues 59 to 63 and 118 to 121; these read DTAGQ and NKCD. Residues C120 and C147 are each lipidated (S-palmitoyl cysteine). C189 is subject to Cysteine methyl ester. A lipid anchor (S-farnesyl cysteine) is attached at C189. A propeptide spans 190 to 192 (removed in mature form); it reads CLM.

This sequence belongs to the small GTPase superfamily. Ras family. As to quaternary structure, interacts with hzg.

The protein resides in the cell membrane. It catalyses the reaction GTP + H2O = GDP + phosphate + H(+). Alternates between an inactive form bound to GDP and an active form bound to GTP. Activated by a guanine nucleotide-exchange factor (GEF) and inactivated by a GTPase-activating protein (GAP). In terms of biological role, may be involved in endocytic processes and/or other transport pathways mediated by vesicle trafficking. May interact functionally with ROP protein. Ras proteins bind GDP/GTP and possess intrinsic GTPase activity. The chain is Ras-like protein 2 (Ras64B) from Drosophila melanogaster (Fruit fly).